The following is a 317-amino-acid chain: uncharacterized protein (317 aa).

This is an uncharacterized protein from Lactuca sativa (Garden lettuce).